The sequence spans 257 residues: Neuroendocrine secretory protein 55 (257 aa).

Residues Met-1–Ala-46 form the signal peptide. The disordered stretch occupies residues Ser-61–His-257. A compositionally biased stretch (low complexity) spans Ala-70 to Ser-82. Positions Glu-86–Cys-103 are enriched in basic and acidic residues. Acidic residues predominate over residues Leu-104–Pro-139. Residues Glu-200–Arg-211 are compositionally biased toward basic and acidic residues. Basic residues predominate over residues Pro-227–Arg-237.

It belongs to the NESP55 family. In terms of processing, binds keratan sulfate chains. Post-translationally, may be proteolytically processed to give rise to a number of active peptides.

The protein localises to the cytoplasmic vesicle. The protein resides in the secretory vesicle. Its subcellular location is the secreted. In Mus musculus (Mouse), this protein is Neuroendocrine secretory protein 55.